The chain runs to 313 residues: Probable RuBisCO transcriptional regulator (313 aa).

The HTH lysR-type domain occupies 6–63 (FTLDQLLILKAIAAQGSFKKAADSLYISQPAVSMQVQNIEKQLNVQLLDRGGRRANLT). The H-T-H motif DNA-binding region spans 23–42 (FKKAADSLYISQPAVSMQVQ).

This sequence belongs to the LysR transcriptional regulatory family.

Its subcellular location is the plastid. The protein localises to the chloroplast. Its function is as follows. Trans-acting transcriptional regulator of RuBisCO genes (rbcL and rbcS) expression. In Chlorokybus atmophyticus (Soil alga), this protein is Probable RuBisCO transcriptional regulator (rbcR).